A 188-amino-acid chain; its full sequence is Protease-associated domain-containing protein 1 (188 aa).

Positions 1 to 21 (MSRGAAGWCCLVLWLPTCVAA) are cleaved as a signal peptide. One can recognise a PA domain in the interval 83-163 (IQDQIALVER…RSLEQHGLPW (81 aa)). N-linked (GlcNAc...) asparagine glycans are attached at residues Asn-121 and Asn-171.

In terms of processing, N-glycosylated; required for efficient secretion. In terms of tissue distribution, expressed in metabolically active tissues such as liver, muscle, adipose, and heart and different brain regions like cortex and hypothalamus, expression is acutely regulated by the nutritional state.

It localises to the secreted. In terms of biological role, plays a role in the modulation of physical activity and adiposity. The polypeptide is Protease-associated domain-containing protein 1 (Mus musculus (Mouse)).